The sequence spans 61 residues: Large ribosomal subunit protein uL30 (61 aa).

It belongs to the universal ribosomal protein uL30 family. In terms of assembly, part of the 50S ribosomal subunit.

The chain is Large ribosomal subunit protein uL30 from Legionella pneumophila (strain Paris).